Here is a 340-residue protein sequence, read N- to C-terminus: Fructose-1,6-bisphosphatase, cytosolic (340 aa).

Mg(2+)-binding residues include Glu-71, Glu-100, Asp-121, Leu-123, and Asp-124. Residues 124 to 127, Asn-215, Tyr-247, Tyr-267, and Lys-277 each bind substrate; that span reads DGSS. Glu-283 is a Mg(2+) binding site.

Belongs to the FBPase class 1 family. Requires Mg(2+) as cofactor.

It localises to the cytoplasm. The catalysed reaction is beta-D-fructose 1,6-bisphosphate + H2O = beta-D-fructose 6-phosphate + phosphate. This Solanum tuberosum (Potato) protein is Fructose-1,6-bisphosphatase, cytosolic.